We begin with the raw amino-acid sequence, 299 residues long: tRNA dimethylallyltransferase (299 aa).

11–18 provides a ligand contact to ATP; the sequence is GPTAVGKT. 13 to 18 lines the substrate pocket; that stretch reads TAVGKT. The interaction with substrate tRNA stretch occupies residues 36–39; sequence DSQQ.

This sequence belongs to the IPP transferase family. Monomer. Requires Mg(2+) as cofactor.

It catalyses the reaction adenosine(37) in tRNA + dimethylallyl diphosphate = N(6)-dimethylallyladenosine(37) in tRNA + diphosphate. In terms of biological role, catalyzes the transfer of a dimethylallyl group onto the adenine at position 37 in tRNAs that read codons beginning with uridine, leading to the formation of N6-(dimethylallyl)adenosine (i(6)A). This is tRNA dimethylallyltransferase from Streptococcus pyogenes serotype M49 (strain NZ131).